We begin with the raw amino-acid sequence, 424 residues long: Histidine--tRNA ligase (424 aa).

This sequence belongs to the class-II aminoacyl-tRNA synthetase family. Homodimer.

Its subcellular location is the cytoplasm. It catalyses the reaction tRNA(His) + L-histidine + ATP = L-histidyl-tRNA(His) + AMP + diphosphate + H(+). This Salmonella heidelberg (strain SL476) protein is Histidine--tRNA ligase.